A 348-amino-acid chain; its full sequence is Myricetin O-methyltransferase (348 aa).

The residue at position 1 (Met1) is an N-acetylmethionine. Residues Gly189, Asp212, Asp232, Met233, and Lys246 each contribute to the S-adenosyl-L-methionine site. Residue His250 is the Proton acceptor of the active site.

In terms of processing, the N-terminus is blocked.

It carries out the reaction S-adenosyl-L-methionine + a 3'-hydroxyflavonoid = S-adenosyl-L-homocysteine + a 3'-methoxyflavonoid.. The enzyme catalyses S-adenosyl-L-methionine + a 5'-hydroxy-3'-methoxyflavonoid = S-adenosyl-L-homocysteine + a 3',5'-dimethoxyflavonoid.. Its function is as follows. Methylates myricetin and dihydromyricetin at 2 sites. Inactive towards 16-hydroxytabersonine, the phenylpropanoids 5-hydroxyferulate, caffeate and their CoA-esters, flavones and flavanones possessing 2 or 3 B-ring hydroxyl groups. The polypeptide is Myricetin O-methyltransferase (Catharanthus roseus (Madagascar periwinkle)).